Reading from the N-terminus, the 565-residue chain is Periplasmic trehalase (565 aa).

The signal sequence occupies residues 1–30; sequence MKSPAPSRPQKMALIPACIFLCFAALSVQA. Substrate contacts are provided by residues Arg152, 159-160, Asn196, 205-207, 277-279, and Gly310; these read WD, RSQ, and RPE. Residues Asp312 and Glu496 each act as proton donor/acceptor in the active site. Position 511 (Glu511) interacts with substrate. The disordered stretch occupies residues 538–565; sequence PCDNVPATRPTVKSATTQPSTKEAQPTP. A compositionally biased stretch (polar residues) spans 548-565; it reads TVKSATTQPSTKEAQPTP.

The protein belongs to the glycosyl hydrolase 37 family. As to quaternary structure, monomer.

The protein resides in the periplasm. The catalysed reaction is alpha,alpha-trehalose + H2O = alpha-D-glucose + beta-D-glucose. In terms of biological role, provides the cells with the ability to utilize trehalose at high osmolarity by splitting it into glucose molecules that can subsequently be taken up by the phosphotransferase-mediated uptake system. This is Periplasmic trehalase from Escherichia coli (strain 55989 / EAEC).